A 100-amino-acid chain; its full sequence is Urease subunit gamma (100 aa).

It belongs to the urease gamma subunit family. Heterotrimer of UreA (gamma), UreB (beta) and UreC (alpha) subunits. Three heterotrimers associate to form the active enzyme.

The protein localises to the cytoplasm. The enzyme catalyses urea + 2 H2O + H(+) = hydrogencarbonate + 2 NH4(+). The protein operates within nitrogen metabolism; urea degradation; CO(2) and NH(3) from urea (urease route): step 1/1. The chain is Urease subunit gamma from Burkholderia multivorans (strain ATCC 17616 / 249).